The sequence spans 1066 residues: MDEEFENDFPYKVMLNQQQDPSDAQSSPTFVPSANPSLTTPWLQTTPSANRPTWLPLQQHMHQLRHTGLLPAVESSFVHGHRRSASAGVGMGNFSNQATIPSNSPAVSNMQPPTQGGQPLYPTNFFTTSVSASSDSFPNSPTVPSKFSLNPSVATSTNISPRRHAKSHSVASVSSPNSHNAVPFTPHAFVPPVNNASPLPALNTLPQLLRPRNLDAQWRPSSLSQTNSPTHAANPSFPGTIVTHNTSNFRPEGGGHRHRRSTGSLSVGSSGSGFSSGGSGNPRKNLFSPYLPQSSIPALLAERRLVTGILIVSKKNRSDAFVSVDGLDAEVFICGSKDRNRALEGDVVAIELLDVDEVWAGKLEKEENRRRKDPISTRGSFDNLRIDAVPFEVPQRSAIKARDDEQVEGQTLFLLDQKQLGADEKPKYAGHVVAVLQRAPGQVFSGTLGILRPSSAANKERQTSSGNQGSSNNSGNDKPKIVWFKPSDKRVPLIAIPTEQAPTDFLGNDQAYAQRLFLASIKRWPVTSLHPFGMLVGELGSMDSMSAQVSALLHDTGVHSEPWEGSAATSAVTALNALSDNFLNVAGCADYRSEDVFLFVKNDVSKAAVSEVKQHESNINSSSATDFVSSAFHIRPTSTGYHVGIHVTDVSRVIEPGSPLDRELQRRSIAVNLCQKSVPLFPTTLGEALSLREDKDCYTMSLLLDVSSTGKIRGTWIGWAVIRPRKAYTMKEADELLQTDARLRLFHTVSSRLRTHHLGTDVPLSRYCRLVRRWDEESCSFDPNETNLFISSAVEVLRETLLDAANRAVASHLRQEFRENAFLRTQRLPSRENCRILQSMAIQMGCVLDLSSTKSLLRSLSLIEDDTVRNILQLYYYKVTPRAVYEMQKYKGNLASQMMSLGIEDESDDLTHFTAPLERYGDIVVHYQLQLLLRGELASEKRLRVWSQAANDASRRLVISKFAQETSIHIKIFSDWAESQVWQDGLVCFVAPSYFDVFFPSLGMEKRVHLDLLNLTHVRFEEDQGILSLYDESGAVTVVKLLTSVKVKLFVQLSTPPLINVSNVEF.

The span at 18–28 shows a compositional bias: low complexity; that stretch reads QQDPSDAQSSP. Disordered stretches follow at residues 18–40, 154–178, and 247–286; these read QQDPSDAQSSPTFVPSANPSLTT, ATSTNISPRRHAKSHSVASVSSPNS, and SNFRPEGGGHRHRRSTGSLSVGSSGSGFSSGGSGNPRKNL. Residues 29–40 show a composition bias toward polar residues; sequence TFVPSANPSLTT. Thr-157 is subject to Phosphothreonine. Low complexity predominate over residues 168-178; sequence HSVASVSSPNS. Thr-262 is subject to Phosphothreonine. A Phosphoserine modification is found at Ser-264. The segment covering 270–280 has biased composition (gly residues); it reads SGSGFSSGGSG. Phosphothreonine is present on Thr-377. The disordered stretch occupies residues 454–480; the sequence is SSAANKERQTSSGNQGSSNNSGNDKPK. Positions 464–476 are enriched in low complexity; that stretch reads SSGNQGSSNNSGN. The region spanning 482-556 is the CSD2 domain; it reads VWFKPSDKRV…AQVSALLHDT (75 aa). Residues 618-934 enclose the RNB domain; the sequence is NINSSSATDF…VHYQLQLLLR (317 aa). Positions 983-1033 constitute a DIS3L2 C-terminal domain; the sequence is QDGLVCFVAPSYFDVFFPSLGMEKRVHLDLLNLTHVRFEEDQGILSLYDES.

Belongs to the RNR ribonuclease family. Interacts with serine/threonine phosphatase ppe1, protein kinase C and an osmosensing MAP kinase.

It localises to the cytoplasm. Its function is as follows. Required for the maintenance of cell shape during interphase. Required for localization of cortical actin to the growing tips before mitosis. The protein is Protein sts5 (sts5) of Schizosaccharomyces pombe (strain 972 / ATCC 24843) (Fission yeast).